The sequence spans 55 residues: Large ribosomal subunit protein bL33 (55 aa).

It belongs to the bacterial ribosomal protein bL33 family.

In Rhodospirillum centenum (strain ATCC 51521 / SW), this protein is Large ribosomal subunit protein bL33.